The chain runs to 499 residues: Anaerobic magnesium-protoporphyrin IX monomethyl ester cyclase (499 aa).

A B12-binding domain is found at 9–145; it reads PHPAIGSRIP…AALENHNDLN (137 aa). Positions 188 to 420 constitute a Radical SAM core domain; the sequence is YGGKQAVVIQ…PPWRIFLWVK (233 aa). [4Fe-4S] cluster-binding residues include cysteine 202, cysteine 206, and cysteine 209.

This sequence belongs to the BchE family. Requires [4Fe-4S] cluster as cofactor. Adenosylcob(III)alamin is required as a cofactor.

The enzyme catalyses Mg-protoporphyrin IX 13-monomethyl ester + 3 S-adenosyl-L-methionine + H2O = 3,8-divinyl protochlorophyllide a + 3 5'-deoxyadenosine + 3 L-methionine + 4 H(+). It functions in the pathway porphyrin-containing compound metabolism; bacteriochlorophyll biosynthesis (light-independent). In terms of biological role, involved in the tetrapyrrole biosynthetic pathways leading to chlorophyll and bacteriochlorophyll (BChl). Catalyzes the anaerobic formation of the isocyclic ring (E-ring) in Mg-protoporphyrin monomethyl ester (MPE) to yield protochlorophyllide a (PChlide a) via a six-electron oxidation and the formation of an oxo group at position C13 using oxygen from a water molecule. The polypeptide is Anaerobic magnesium-protoporphyrin IX monomethyl ester cyclase (Synechocystis sp. (strain ATCC 27184 / PCC 6803 / Kazusa)).